The sequence spans 425 residues: Serine--tRNA ligase (425 aa).

Position 230–232 (230–232 (TAE)) interacts with L-serine. 261–263 (RSE) is a binding site for ATP. An L-serine-binding site is contributed by Glu-284. 348–351 (EISS) contacts ATP. Residue Ser-384 coordinates L-serine.

It belongs to the class-II aminoacyl-tRNA synthetase family. Type-1 seryl-tRNA synthetase subfamily. In terms of assembly, homodimer. The tRNA molecule binds across the dimer.

Its subcellular location is the cytoplasm. It catalyses the reaction tRNA(Ser) + L-serine + ATP = L-seryl-tRNA(Ser) + AMP + diphosphate + H(+). The enzyme catalyses tRNA(Sec) + L-serine + ATP = L-seryl-tRNA(Sec) + AMP + diphosphate + H(+). It participates in aminoacyl-tRNA biosynthesis; selenocysteinyl-tRNA(Sec) biosynthesis; L-seryl-tRNA(Sec) from L-serine and tRNA(Sec): step 1/1. Functionally, catalyzes the attachment of serine to tRNA(Ser). Is also able to aminoacylate tRNA(Sec) with serine, to form the misacylated tRNA L-seryl-tRNA(Sec), which will be further converted into selenocysteinyl-tRNA(Sec). This is Serine--tRNA ligase from Streptococcus equi subsp. zooepidemicus (strain MGCS10565).